The primary structure comprises 829 residues: DNA topoisomerase 1 (829 aa).

The disordered stretch occupies residues 1–248 (MSEDHVQNDS…AKGNEEGVKK (248 aa)). The segment covering 22–36 (HKHKKDKEHRHKEHK) has biased composition (basic residues). Basic and acidic residues-rich tracts occupy residues 37–58 (KDKD…SEKK), 68–159 (KHRE…EKMK), and 193–220 (KENK…DDKK). Interaction with DNA stretches follow at residues 481 to 482 (KY), 544 to 549 (RAGNEK), and 641 to 643 (TAK). Residues 488–821 (SSRIKGEKDW…SIWQTTTSNF (334 aa)) enclose the Topo IB-type catalytic domain. Tyr-779 functions as the O-(3'-phospho-DNA)-tyrosine intermediate in the catalytic mechanism.

The protein belongs to the type IB topoisomerase family. As to quaternary structure, monomer.

It localises to the nucleus. The enzyme catalyses ATP-independent breakage of single-stranded DNA, followed by passage and rejoining.. In terms of biological role, releases the supercoiling and torsional tension of DNA introduced during the DNA replication and transcription by transiently cleaving and rejoining one strand of the DNA duplex. Introduces a single-strand break via transesterification at a target site in duplex DNA. The scissile phosphodiester is attacked by the catalytic tyrosine of the enzyme, resulting in the formation of a DNA-(3'-phosphotyrosyl)-enzyme intermediate and the expulsion of a 5'-OH DNA strand. TThe free DNA strand then rotates around the intact phosphodiester bond on the opposing strand, thus removing DNA supercoils. Finally, in the religation step, the DNA 5'-OH attacks the covalent intermediate to expel the active-site tyrosine and restore the DNA phosphodiester backbone. May play a role in the circadian transcription of the core circadian clock component BMAL1. In Xenopus laevis (African clawed frog), this protein is DNA topoisomerase 1 (top1).